A 96-amino-acid polypeptide reads, in one-letter code: Small ribosomal subunit protein bS6 (96 aa).

This sequence belongs to the bacterial ribosomal protein bS6 family.

In terms of biological role, binds together with bS18 to 16S ribosomal RNA. The polypeptide is Small ribosomal subunit protein bS6 (Streptococcus thermophilus (strain ATCC BAA-491 / LMD-9)).